Consider the following 301-residue polypeptide: Methionine aminopeptidase (301 aa).

Substrate is bound at residue His65. 3 residues coordinate a divalent metal cation: Asp85, Asp96, and His156. His164 is a binding site for substrate. A divalent metal cation-binding residues include Glu189 and Glu284.

This sequence belongs to the peptidase M24A family. Methionine aminopeptidase archaeal type 2 subfamily. As to quaternary structure, monomer. The cofactor is Co(2+). Requires Zn(2+) as cofactor. Mn(2+) serves as cofactor. It depends on Fe(2+) as a cofactor.

The enzyme catalyses Release of N-terminal amino acids, preferentially methionine, from peptides and arylamides.. In terms of biological role, removes the N-terminal methionine from nascent proteins. The N-terminal methionine is often cleaved when the second residue in the primary sequence is small and uncharged (Met-Ala-, Cys, Gly, Pro, Ser, Thr, or Val). This chain is Methionine aminopeptidase, found in Saccharolobus solfataricus (strain ATCC 35092 / DSM 1617 / JCM 11322 / P2) (Sulfolobus solfataricus).